Here is a 354-residue protein sequence, read N- to C-terminus: Mycothiol acetyltransferase (354 aa).

Residues 1–18 (MMVDNQTPDSSTLSTAST) show a composition bias toward polar residues. The tract at residues 1–21 (MMVDNQTPDSSTLSTASTPVY) is disordered. 2 consecutive N-acetyltransferase domains span residues 21–176 (YAEP…QTRE) and 191–354 (LRMR…EPAA). Glutamate 52 contacts 1D-myo-inositol 2-(L-cysteinylamino)-2-deoxy-alpha-D-glucopyranoside. 101 to 103 (AAV) contributes to the acetyl-CoA binding site. Residues glutamate 217, lysine 259, and glutamate 274 each contribute to the 1D-myo-inositol 2-(L-cysteinylamino)-2-deoxy-alpha-D-glucopyranoside site. Residues 278 to 280 (VGV) and 285 to 291 (QGGGLGR) contribute to the acetyl-CoA site. Tyrosine 318 contacts 1D-myo-inositol 2-(L-cysteinylamino)-2-deoxy-alpha-D-glucopyranoside.

It belongs to the acetyltransferase family. MshD subfamily. Monomer.

It catalyses the reaction 1D-myo-inositol 2-(L-cysteinylamino)-2-deoxy-alpha-D-glucopyranoside + acetyl-CoA = mycothiol + CoA + H(+). Its function is as follows. Catalyzes the transfer of acetyl from acetyl-CoA to desacetylmycothiol (Cys-GlcN-Ins) to form mycothiol. In Rothia mucilaginosa (strain DY-18) (Stomatococcus mucilaginosus), this protein is Mycothiol acetyltransferase.